A 216-amino-acid chain; its full sequence is ATP phosphoribosyltransferase (216 aa).

This sequence belongs to the ATP phosphoribosyltransferase family. Short subfamily. As to quaternary structure, heteromultimer composed of HisG and HisZ subunits.

Its subcellular location is the cytoplasm. The catalysed reaction is 1-(5-phospho-beta-D-ribosyl)-ATP + diphosphate = 5-phospho-alpha-D-ribose 1-diphosphate + ATP. It participates in amino-acid biosynthesis; L-histidine biosynthesis; L-histidine from 5-phospho-alpha-D-ribose 1-diphosphate: step 1/9. Functionally, catalyzes the condensation of ATP and 5-phosphoribose 1-diphosphate to form N'-(5'-phosphoribosyl)-ATP (PR-ATP). Has a crucial role in the pathway because the rate of histidine biosynthesis seems to be controlled primarily by regulation of HisG enzymatic activity. In Nitrosomonas europaea (strain ATCC 19718 / CIP 103999 / KCTC 2705 / NBRC 14298), this protein is ATP phosphoribosyltransferase.